A 411-amino-acid polypeptide reads, in one-letter code: Glycerol-3-phosphate dehydrogenase [NAD(+)] (411 aa).

NAD(+) contacts are provided by residues 71–76 (GSGNWG), Phe-103, and Phe-159. Lys-182 is a substrate binding site. An NAD(+)-binding site is contributed by Ala-215. The active-site Proton acceptor is Lys-275. NAD(+) contacts are provided by Arg-340 and Gln-369. 340-341 (RN) lines the substrate pocket.

Belongs to the NAD-dependent glycerol-3-phosphate dehydrogenase family.

The catalysed reaction is sn-glycerol 3-phosphate + NAD(+) = dihydroxyacetone phosphate + NADH + H(+). The chain is Glycerol-3-phosphate dehydrogenase [NAD(+)] (GPD) from Lachancea thermotolerans (Yeast).